Reading from the N-terminus, the 230-residue chain is Probable septum site-determining protein MinC (230 aa).

It belongs to the MinC family. Interacts with MinD and FtsZ.

Functionally, cell division inhibitor that blocks the formation of polar Z ring septums. Rapidly oscillates between the poles of the cell to destabilize FtsZ filaments that have formed before they mature into polar Z rings. Prevents FtsZ polymerization. This Rhodopseudomonas palustris (strain BisA53) protein is Probable septum site-determining protein MinC.